The chain runs to 190 residues: Heme-binding protein 1 (190 aa).

The protein belongs to the HEBP family. In terms of assembly, monomer.

Its subcellular location is the cytoplasm. Its function is as follows. May bind free porphyrinogens that may be present in the cell and thus facilitate removal of these potentially toxic compound. Binds with a high affinity to one molecule of heme or porphyrins. It binds metalloporphyrins, free porphyrins and N-methylprotoporphyrin with similar affinities. In Xenopus laevis (African clawed frog), this protein is Heme-binding protein 1 (hebp1).